We begin with the raw amino-acid sequence, 1177 residues long: DNA-directed RNA polymerase subunit beta (1177 aa).

Residues 1147-1161 (DDTEIEMRDTEDDDD) show a composition bias toward acidic residues. The segment at 1147 to 1177 (DDTEIEMRDTEDDDDHQSADKLNVEVETTKE) is disordered. Basic and acidic residues predominate over residues 1162 to 1177 (HQSADKLNVEVETTKE).

Belongs to the RNA polymerase beta chain family. As to quaternary structure, the RNAP catalytic core consists of 2 alpha, 1 beta, 1 beta' and 1 omega subunit. When a sigma factor is associated with the core the holoenzyme is formed, which can initiate transcription.

It catalyses the reaction RNA(n) + a ribonucleoside 5'-triphosphate = RNA(n+1) + diphosphate. In terms of biological role, DNA-dependent RNA polymerase catalyzes the transcription of DNA into RNA using the four ribonucleoside triphosphates as substrates. The protein is DNA-directed RNA polymerase subunit beta of Bacillus anthracis (strain A0248).